Here is a 107-residue protein sequence, read N- to C-terminus: uncharacterized protein (107 aa).

The helical transmembrane segment at 52–72 threads the bilayer; the sequence is LIIHDLFIYIFILNFFFFPFC.

The protein localises to the membrane. This is an uncharacterized protein from Saccharomyces cerevisiae (strain ATCC 204508 / S288c) (Baker's yeast).